The sequence spans 325 residues: Glycine--tRNA ligase alpha subunit (325 aa).

Belongs to the class-II aminoacyl-tRNA synthetase family. Tetramer of two alpha and two beta subunits.

The protein resides in the cytoplasm. It carries out the reaction tRNA(Gly) + glycine + ATP = glycyl-tRNA(Gly) + AMP + diphosphate. The sequence is that of Glycine--tRNA ligase alpha subunit from Ralstonia nicotianae (strain ATCC BAA-1114 / GMI1000) (Ralstonia solanacearum).